Consider the following 209-residue polypeptide: Large ribosomal subunit protein bL25 (209 aa).

Residues 188–209 (STSMEKEGEGSQEPTAAPSSEN) are disordered. A compositionally biased stretch (polar residues) spans 199–209 (QEPTAAPSSEN).

This sequence belongs to the bacterial ribosomal protein bL25 family. CTC subfamily. In terms of assembly, part of the 50S ribosomal subunit; part of the 5S rRNA/L5/L18/L25 subcomplex. Contacts the 5S rRNA. Binds to the 5S rRNA independently of L5 and L18.

Its function is as follows. This is one of the proteins that binds to the 5S RNA in the ribosome where it forms part of the central protuberance. The chain is Large ribosomal subunit protein bL25 from Ehrlichia canis (strain Jake).